The sequence spans 167 residues: Ubiquitin-conjugating enzyme E2 2 (167 aa).

The 147-residue stretch at 4–150 (PARRRLMRDF…VKETVEKSWE (147 aa)) folds into the UBC core domain. Cysteine 88 acts as the Glycyl thioester intermediate in catalysis. The interval 148-167 (SWEDNMDDMDDSDEDDEDDE) is disordered. Over residues 151-167 (DNMDDMDDSDEDDEDDE) the composition is skewed to acidic residues.

This sequence belongs to the ubiquitin-conjugating enzyme family.

The protein localises to the cytoplasm. It localises to the nucleus. The enzyme catalyses S-ubiquitinyl-[E1 ubiquitin-activating enzyme]-L-cysteine + [E2 ubiquitin-conjugating enzyme]-L-cysteine = [E1 ubiquitin-activating enzyme]-L-cysteine + S-ubiquitinyl-[E2 ubiquitin-conjugating enzyme]-L-cysteine.. The protein operates within protein modification; protein ubiquitination. Catalyzes the covalent attachment of ubiquitin to other proteins. Plays a role in transcription regulation by catalyzing the monoubiquitination of histone H2B to form H2BK123ub1. H2BK123ub1 gives a specific tag for epigenetic transcriptional activation and is also a prerequisite for H3K4me and H3K79me formation. Also involved in postreplication repair of UV-damaged DNA, in N-end rule-dependent protein degradation and in sporulation. The polypeptide is Ubiquitin-conjugating enzyme E2 2 (UBC2) (Candida glabrata (strain ATCC 2001 / BCRC 20586 / JCM 3761 / NBRC 0622 / NRRL Y-65 / CBS 138) (Yeast)).